The sequence spans 401 residues: tRNA(Met) cytidine acetate ligase (401 aa).

ATP-binding positions include 7–20 (IVEY…HLYH), Gly-101, Asn-160, and 185–186 (RI).

Belongs to the TmcAL family.

It is found in the cytoplasm. It catalyses the reaction cytidine(34) in elongator tRNA(Met) + acetate + ATP = N(4)-acetylcytidine(34) in elongator tRNA(Met) + AMP + diphosphate. Its function is as follows. Catalyzes the formation of N(4)-acetylcytidine (ac(4)C) at the wobble position of elongator tRNA(Met), using acetate and ATP as substrates. First activates an acetate ion to form acetyladenylate (Ac-AMP) and then transfers the acetyl group to tRNA to form ac(4)C34. This Geobacillus sp. (strain WCH70) protein is tRNA(Met) cytidine acetate ligase.